An 829-amino-acid chain; its full sequence is Ectonucleotide pyrophosphatase/phosphodiesterase C27A7.1 (829 aa).

A helical; Signal-anchor for type II membrane protein membrane pass occupies residues 54-74 (VIGIAVLLLAMVVIVVIVLLL). Threonine 224 functions as the Nucleophile in the catalytic mechanism. Residues asparagine 296, asparagine 424, asparagine 514, asparagine 542, asparagine 582, asparagine 649, asparagine 733, and asparagine 748 are each glycosylated (N-linked (GlcNAc...) asparagine). Cysteine 439 and cysteine 782 are disulfide-bonded.

The protein belongs to the nucleotide pyrophosphatase/phosphodiesterase family.

The protein localises to the membrane. Functionally, probable phosphodiesterase. In Caenorhabditis elegans, this protein is Ectonucleotide pyrophosphatase/phosphodiesterase C27A7.1.